We begin with the raw amino-acid sequence, 1004 residues long: 2-oxoglutarate dehydrogenase E1 component (1004 aa).

This sequence belongs to the alpha-ketoglutarate dehydrogenase family. As to quaternary structure, homodimer. Part of the 2-oxoglutarate dehydrogenase (OGDH) complex composed of E1 (2-oxoglutarate dehydrogenase), E2 (dihydrolipoamide succinyltransferase) and E3 (dihydrolipoamide dehydrogenase); the complex contains multiple copies of the three enzymatic components (E1, E2 and E3). Thiamine diphosphate is required as a cofactor.

The catalysed reaction is N(6)-[(R)-lipoyl]-L-lysyl-[protein] + 2-oxoglutarate + H(+) = N(6)-[(R)-S(8)-succinyldihydrolipoyl]-L-lysyl-[protein] + CO2. Its function is as follows. E1 component of the 2-oxoglutarate dehydrogenase (OGDH) complex which catalyzes the decarboxylation of 2-oxoglutarate, the first step in the conversion of 2-oxoglutarate to succinyl-CoA and CO(2). This Brucella canis (strain ATCC 23365 / NCTC 10854 / RM-666) protein is 2-oxoglutarate dehydrogenase E1 component.